The primary structure comprises 316 residues: tRNA dimethylallyltransferase (316 aa).

An ATP-binding site is contributed by 17–24 (GPTASGKT). 19 to 24 (TASGKT) serves as a coordination point for substrate. Interaction with substrate tRNA stretches follow at residues 42-45 (DSAL), 166-170 (QRLSR), and 247-252 (RCVGYR).

This sequence belongs to the IPP transferase family. Monomer. Mg(2+) is required as a cofactor.

It carries out the reaction adenosine(37) in tRNA + dimethylallyl diphosphate = N(6)-dimethylallyladenosine(37) in tRNA + diphosphate. Functionally, catalyzes the transfer of a dimethylallyl group onto the adenine at position 37 in tRNAs that read codons beginning with uridine, leading to the formation of N6-(dimethylallyl)adenosine (i(6)A). The protein is tRNA dimethylallyltransferase of Citrobacter koseri (strain ATCC BAA-895 / CDC 4225-83 / SGSC4696).